The following is a 499-amino-acid chain: Calcium/calmodulin-dependent protein kinase type II subunit delta (499 aa).

At Ala-2 the chain carries N-acetylalanine. The Protein kinase domain occupies 14–272; that stretch reads YQLFEELGKG…ASEALKHPWI (259 aa). ATP contacts are provided by residues 20–28 and Lys-43; that span reads LGKGAFSVV. The active-site Proton acceptor is Asp-136. The segment at 283-292 is autoinhibitory domain; it reads HRQETVDCLK. Residue Thr-287 is modified to Phosphothreonine; by autocatalysis. The tract at residues 291–301 is calmodulin-binding; that stretch reads LKKFNARRKLK. A phosphothreonine; by autocatalysis mark is found at Thr-306 and Thr-307. Position 315 is a phosphoserine (Ser-315). At Lys-318 the chain carries N6-acetyllysine. Residues Ser-319 and Ser-330 each carry the phosphoserine modification. Residue Thr-331 is modified to Phosphothreonine. Ser-333 carries the phosphoserine modification. 2 positions are modified to phosphothreonine: Thr-336 and Thr-337. Ser-404, Ser-490, and Ser-494 each carry phosphoserine.

Belongs to the protein kinase superfamily. CAMK Ser/Thr protein kinase family. CaMK subfamily. CAMK2 is composed of 4 different chains: alpha (CAMK2A), beta (CAMK2B), gamma (CAMK2G), and delta (CAMK2D). The different isoforms assemble into homo- or heteromultimeric holoenzymes composed of 12 subunits with two hexameric rings stacked one on top of the other. Interacts with RRAD and CACNB2. In terms of processing, autophosphorylation of Thr-287 following activation by Ca(2+)/calmodulin. Phosphorylation of Thr-287 locks the kinase into an activated state. Expressed in cardiac muscle and skeletal muscle. Isoform Delta 3, isoform Delta 2, isoform Delta 8 and isoform Delta 9 are expressed in cardiac muscle. Isoform Delta 11 is expressed in skeletal muscle.

Its subcellular location is the cell membrane. It localises to the sarcolemma. The protein resides in the sarcoplasmic reticulum membrane. The enzyme catalyses L-seryl-[protein] + ATP = O-phospho-L-seryl-[protein] + ADP + H(+). It catalyses the reaction L-threonyl-[protein] + ATP = O-phospho-L-threonyl-[protein] + ADP + H(+). Activated by Ca(2+)/calmodulin. Binding of calmodulin results in conformational change that relieves intrasteric autoinhibition and allows autophosphorylation of Thr-287 which turns the kinase in a constitutively active form and confers to the kinase a Ca(2+)-independent activity. Functionally, calcium/calmodulin-dependent protein kinase involved in the regulation of Ca(2+) homeostatis and excitation-contraction coupling (ECC) in heart by targeting ion channels, transporters and accessory proteins involved in Ca(2+) influx into the myocyte, Ca(2+) release from the sarcoplasmic reticulum (SR), SR Ca(2+) uptake and Na(+) and K(+) channel transport. Targets also transcription factors and signaling molecules to regulate heart function. In its activated form, is involved in the pathogenesis of dilated cardiomyopathy and heart failure. Contributes to cardiac decompensation and heart failure by regulating SR Ca(2+) release via direct phosphorylation of RYR2 Ca(2+) channel on 'Ser-2808'. In the nucleus, phosphorylates the MEF2 repressor HDAC4, promoting its nuclear export and binding to 14-3-3 protein, and expression of MEF2 and genes involved in the hypertrophic program. Is essential for left ventricular remodeling responses to myocardial infarction. In pathological myocardial remodeling acts downstream of the beta adrenergic receptor signaling cascade to regulate key proteins involved in ECC. Regulates Ca(2+) influx to myocytes by binding and phosphorylating the L-type Ca(2+) channel subunit beta-2 CACNB2. In addition to Ca(2+) channels, can target and regulate the cardiac sarcolemmal Na(+) channel Nav1.5/SCN5A and the K+ channel Kv4.3/KCND3, which contribute to arrhythmogenesis in heart failure. Phosphorylates phospholamban (PLN/PLB), an endogenous inhibitor of SERCA2A/ATP2A2, contributing to the enhancement of SR Ca(2+) uptake that may be important in frequency-dependent acceleration of relaxation (FDAR) and maintenance of contractile function during acidosis. May participate in the modulation of skeletal muscle function in response to exercise, by regulating SR Ca(2+) transport through phosphorylation of PLN/PLB and triadin, a ryanodine receptor-coupling factor. In response to interferon-gamma (IFN-gamma) stimulation, catalyzes phosphorylation of STAT1, stimulating the JAK-STAT signaling pathway. The chain is Calcium/calmodulin-dependent protein kinase type II subunit delta (CAMK2D) from Homo sapiens (Human).